The sequence spans 458 residues: Bifunctional protein GlmU (458 aa).

The segment at 1-230 is pyrophosphorylase; that stretch reads MLQIDVVILA…DWEVVGVNDK (230 aa). UDP-N-acetyl-alpha-D-glucosamine contacts are provided by residues 9 to 12, K23, Q75, and 80 to 81; these read LAAG and GT. D104 provides a ligand contact to Mg(2+). UDP-N-acetyl-alpha-D-glucosamine contacts are provided by G139, E155, N170, and N228. Residue N228 coordinates Mg(2+). The interval 231 to 251 is linker; sequence IQLSTLERAHQQDVAKGLMEQ. The interval 252-458 is N-acetyltransferase; sequence GVMFADPARF…NWKRPKKNKD (207 aa). R334 and K352 together coordinate UDP-N-acetyl-alpha-D-glucosamine. H364 acts as the Proton acceptor in catalysis. Residues Y367 and N378 each contribute to the UDP-N-acetyl-alpha-D-glucosamine site. Residues A381, 387–388, S406, A424, and R441 contribute to the acetyl-CoA site; that span reads NY.

The protein in the N-terminal section; belongs to the N-acetylglucosamine-1-phosphate uridyltransferase family. In the C-terminal section; belongs to the transferase hexapeptide repeat family. Homotrimer. Requires Mg(2+) as cofactor.

Its subcellular location is the cytoplasm. It carries out the reaction alpha-D-glucosamine 1-phosphate + acetyl-CoA = N-acetyl-alpha-D-glucosamine 1-phosphate + CoA + H(+). The catalysed reaction is N-acetyl-alpha-D-glucosamine 1-phosphate + UTP + H(+) = UDP-N-acetyl-alpha-D-glucosamine + diphosphate. It functions in the pathway nucleotide-sugar biosynthesis; UDP-N-acetyl-alpha-D-glucosamine biosynthesis; N-acetyl-alpha-D-glucosamine 1-phosphate from alpha-D-glucosamine 6-phosphate (route II): step 2/2. Its pathway is nucleotide-sugar biosynthesis; UDP-N-acetyl-alpha-D-glucosamine biosynthesis; UDP-N-acetyl-alpha-D-glucosamine from N-acetyl-alpha-D-glucosamine 1-phosphate: step 1/1. The protein operates within bacterial outer membrane biogenesis; LPS lipid A biosynthesis. Its function is as follows. Catalyzes the last two sequential reactions in the de novo biosynthetic pathway for UDP-N-acetylglucosamine (UDP-GlcNAc). The C-terminal domain catalyzes the transfer of acetyl group from acetyl coenzyme A to glucosamine-1-phosphate (GlcN-1-P) to produce N-acetylglucosamine-1-phosphate (GlcNAc-1-P), which is converted into UDP-GlcNAc by the transfer of uridine 5-monophosphate (from uridine 5-triphosphate), a reaction catalyzed by the N-terminal domain. The polypeptide is Bifunctional protein GlmU (Nitrosomonas eutropha (strain DSM 101675 / C91 / Nm57)).